The sequence spans 335 residues: Transcriptional coactivator YAP1-B (335 aa).

Over residues 1-13 (MEPGSQQQPSAPG) the composition is skewed to low complexity. A disordered region spans residues 1–21 (MEPGSQQQPSAPGQQPPPVGH). S30 bears the Phosphoserine; by LATS1 and LATS2 mark. Polar residues predominate over residues 114–124 (MNQQRLSQSAP). Residues 114 to 146 (MNQQRLSQSAPVKSPPALQPQSPPSGVLGSGGN) are disordered. Residues 126–136 (KSPPALQPQSP) show a composition bias toward pro residues. The segment at 137-335 (PSGVLGSGGN…LDKESFLTWL (199 aa)) is transactivation domain. The stretch at 145-173 (GNQQMRLQQLQMEKERLRLKHQELLRQVR) forms a coiled coil.

The protein belongs to the YAP1 family. In terms of processing, phosphorylated by lats1 and lats2; leading to cytoplasmic translocation and inactivation.

It localises to the cytoplasm. The protein localises to the nucleus. Its subcellular location is the cell junction. The protein resides in the tight junction. It is found in the cell membrane. In terms of biological role, transcriptional regulator which can act both as a coactivator and a corepressor and is the critical downstream regulatory target in the Hippo signaling pathway that plays a pivotal role in organ size control and tumor suppression by restricting proliferation and promoting apoptosis. Plays a key role in tissue tension and 3D tissue shape by regulating cortical actomyosin network formation. The polypeptide is Transcriptional coactivator YAP1-B (Xenopus laevis (African clawed frog)).